The following is a 583-amino-acid chain: Aspartyl protease APCB1 (583 aa).

The chain crosses the membrane as a helical span at residues 83 to 103 (LVLGLLGISLLAVAFYASVFP). The Peptidase A1 domain occupies 203-564 (YYTRILVGKP…DNVKRRIGWM (362 aa)). Catalysis depends on residues D223 and D431.

Belongs to the peptidase A1 family. In terms of assembly, interacts with BAG6 and BAGP1.

The protein resides in the membrane. Functionally, involved in proteolytic processing of BAG6 and plant basal immunity. This chain is Aspartyl protease APCB1, found in Arabidopsis thaliana (Mouse-ear cress).